A 352-amino-acid polypeptide reads, in one-letter code: Nicotinate-nucleotide--dimethylbenzimidazole phosphoribosyltransferase (352 aa).

The Proton acceptor role is filled by glutamate 318.

The protein belongs to the CobT family.

The catalysed reaction is 5,6-dimethylbenzimidazole + nicotinate beta-D-ribonucleotide = alpha-ribazole 5'-phosphate + nicotinate + H(+). The protein operates within nucleoside biosynthesis; alpha-ribazole biosynthesis; alpha-ribazole from 5,6-dimethylbenzimidazole: step 1/2. Functionally, catalyzes the synthesis of alpha-ribazole-5'-phosphate from nicotinate mononucleotide (NAMN) and 5,6-dimethylbenzimidazole (DMB). The sequence is that of Nicotinate-nucleotide--dimethylbenzimidazole phosphoribosyltransferase from Geotalea uraniireducens (strain Rf4) (Geobacter uraniireducens).